Here is a 259-residue protein sequence, read N- to C-terminus: 1,2-dihydroxy-1,2-dihydronaphthalene dehydrogenase (259 aa).

NAD(+) contacts are provided by residues 8–35 and Asp58; that span reads AITG…SALV. Ser140 lines the substrate pocket. Tyr153 (proton acceptor) is an active-site residue. An NAD(+)-binding site is contributed by Lys157.

Belongs to the short-chain dehydrogenases/reductases (SDR) family.

The enzyme catalyses (1R,2S)-1,2-dihydronaphthalene-1,2-diol + NAD(+) = naphthalene-1,2-diol + NADH + H(+). The protein operates within aromatic compound metabolism; naphthalene degradation. Its function is as follows. Catalyzes the oxidation of naphthalene dihydrodiol into 1,2-dihydroxynaphthalene. This chain is 1,2-dihydroxy-1,2-dihydronaphthalene dehydrogenase, found in Ralstonia sp.